The chain runs to 656 residues: MSLHSTFKKISPTTLLKQEDWEGLCLYFSQHPEKVRDSAGNEQNIILFAIACLRKDETDVGLTLLSDRVLTAKNGRDLLRRWVISPLASSQPDAVLQVVNKLLAVNVCQPEDVLLVASVLLKSKQYATVADLAEQAWLAFSGNSQIFALHLRTLVLMDKELQAISLARTQAQEVPPRGDMIATCLSFLNKSRLPEDHDLARALLPFFALERQESAGLAVDTLCAVGKYQEAIQTGESALARGLDGAALRRSLGLAYYQSGRSREAKLQAAEHWRHALQFNSDNVRIVTLYADALIRTGQNEKAIPLLQQSLATHPDLPYVRAMYARALRQVGQYTAASDEFVQLAREKGVTSKWNRYAAAALLQAGKTSEAESVFEHYIQARASHLPQSFEEGLLALDGQISAVNLPPERLDWAWEVAGRQSGIERDEWERRAKWGYLADNFLLDWLECRGEQADEPMYRLADISHVEQFFQRLQLDQRGCIIVSAHLGAMYAGPMILSLLEMNSKWVASTPGVLKGGYGERLISVSDKSEADVVRACMQTLHSGQSLVVAIDGALNLSAPTIDFFGQQITYSTFCSRLAWKMHLPTVFSVPIWKNRHIHFVLERMVDPLKFESQLSFTERWKENYLQCVTRILQSDPENLRLSGGIWRNIIRRDS.

Its function is as follows. May be involved in translocation of the Vi antigen. This is Vi polysaccharide export protein VexE (vexE) from Salmonella typhi.